A 368-amino-acid chain; its full sequence is Homoserine O-acetyltransferase (368 aa).

Residues 41–352 (NVILITHALS…DYGHDSFLVE (312 aa)) enclose the AB hydrolase-1 domain. Residue Ser-147 is the Nucleophile of the active site. Arg-219 serves as a coordination point for substrate. Residues Asp-313 and His-346 contribute to the active site. Asp-347 contacts substrate.

Belongs to the AB hydrolase superfamily. MetX family. As to quaternary structure, homodimer.

It is found in the cytoplasm. It carries out the reaction L-homoserine + acetyl-CoA = O-acetyl-L-homoserine + CoA. It participates in amino-acid biosynthesis; L-methionine biosynthesis via de novo pathway; O-acetyl-L-homoserine from L-homoserine: step 1/1. In terms of biological role, transfers an acetyl group from acetyl-CoA to L-homoserine, forming acetyl-L-homoserine. The chain is Homoserine O-acetyltransferase from Nautilia profundicola (strain ATCC BAA-1463 / DSM 18972 / AmH).